The following is a 135-amino-acid chain: MIKLRLKRFGKKREASFRLVACNSTSRRDGRPLQELGFYNPRTKETRLDTEAIRERLGQGAQPTDVVRTLLERGGLLEKTVRPAETVGKAKQAAKREADAKQAAKEAAEAKAAAADEKAAEAEASDSAESESTEG.

The segment at 82-135 is disordered; it reads RPAETVGKAKQAAKREADAKQAAKEAAEAKAAAADEKAAEAEASDSAESESTEG. The span at 94-121 shows a compositional bias: basic and acidic residues; sequence AKREADAKQAAKEAAEAKAAAADEKAAE. Positions 123–135 are enriched in acidic residues; the sequence is EASDSAESESTEG.

This sequence belongs to the bacterial ribosomal protein bS16 family.

The sequence is that of Small ribosomal subunit protein bS16 from Synechococcus sp. (strain CC9605).